A 396-amino-acid chain; its full sequence is Elongation factor Tu (396 aa).

One can recognise a tr-type G domain in the interval 10–206 (KPHCNIGTIG…AVDAYIPQPE (197 aa)). The segment at 19–26 (GHVDHGKT) is G1. 19–26 (GHVDHGKT) lines the GTP pocket. T26 is a Mg(2+) binding site. A G2 region spans residues 60–64 (GITIS). The interval 81–84 (DCPG) is G3. GTP-binding positions include 81 to 85 (DCPGH) and 136 to 139 (NKVD). A G4 region spans residues 136 to 139 (NKVD). The segment at 174–176 (SAL) is G5.

This sequence belongs to the TRAFAC class translation factor GTPase superfamily. Classic translation factor GTPase family. EF-Tu/EF-1A subfamily. As to quaternary structure, monomer.

Its subcellular location is the cytoplasm. The enzyme catalyses GTP + H2O = GDP + phosphate + H(+). GTP hydrolase that promotes the GTP-dependent binding of aminoacyl-tRNA to the A-site of ribosomes during protein biosynthesis. This is Elongation factor Tu from Parvibaculum lavamentivorans (strain DS-1 / DSM 13023 / NCIMB 13966).